The primary structure comprises 224 residues: Respiratory supercomplex factor 2, mitochondrial (224 aa).

Residues 1–13 (MKILTQDEIEAHR) are Mitochondrial intermembrane-facing. The chain crosses the membrane as a helical span at residues 14-38 (SHTLKGGIEGALAGFAISAIIFKVL). The Mitochondrial matrix portion of the chain corresponds to 39–47 (PRRYPKFKP). The helical transmembrane segment at 48–75 (STLTWSIKTALWITPPTVLTAICAEEAS) threads the bilayer. Residues 76–103 (NNFDATMYGSGSSSEDALDEHRRWKSLS) are Mitochondrial intermembrane-facing. Residues 89–180 (SEDALDEHRR…YENKLHPNKQ (92 aa)) form the HIG1 domain. A helical membrane pass occupies residues 104–133 (TKDKFVEGLSNNKYKIITGAWAASLYGSWV). Topologically, residues 134–142 (IVNKDPIMT) are mitochondrial matrix. The chain crosses the membrane as a helical span at residues 143-173 (KAQKIVQARMYAQFITVGLLLASVGLSMYEN). The Mitochondrial intermembrane segment spans residues 174–184 (KLHPNKQKVNE). Residues 185 to 204 (MRRWENALRVAEEEERLEKE) form a helical membrane-spanning segment. Topologically, residues 205–224 (GRRTGYVSNEERINSKIFKS) are mitochondrial matrix.

In terms of assembly, associates with a subpopulation of the cytochrome bc1-cytochrome c oxidase supercomplexes. Associates in substoichiometric amounts with complex IV. Interacts with COX3.

Its subcellular location is the mitochondrion membrane. In terms of biological role, assembly factor that plays a role in the assembly of the respiratory chain supercomplexes (SCs) composed of ubiquinol-cytochrome c oxidoreductase (cytochrome b-c1 complex, complex III, CIII) and cytochrome c oxidase (complex IV, CIV). May be required for late-stage assembly of the COX12 and COX13 subunits. Required for the generation and maintenance of a normal proton motive force (PMF) across the inner mitochondrial membrane (IMM) by preventing proton leakage through an inactive population of CIV that accumulates when RCF1 and/or RCF2 proteins are absent. The chain is Respiratory supercomplex factor 2, mitochondrial (RCF2) from Saccharomyces cerevisiae (strain ATCC 204508 / S288c) (Baker's yeast).